The following is a 282-amino-acid chain: Shikimate dehydrogenase (NADP(+)) (282 aa).

Residues 15 to 17 (SKS) and Thr-62 contribute to the shikimate site. Lys-66 (proton acceptor) is an active-site residue. Shikimate-binding residues include Asn-87 and Asp-103. NADP(+)-binding positions include 127–131 (GAGGA), 151–156 (NRTHTK), and Met-220. Position 222 (Tyr-222) interacts with shikimate. Gly-244 provides a ligand contact to NADP(+).

Belongs to the shikimate dehydrogenase family. Homodimer.

The enzyme catalyses shikimate + NADP(+) = 3-dehydroshikimate + NADPH + H(+). It participates in metabolic intermediate biosynthesis; chorismate biosynthesis; chorismate from D-erythrose 4-phosphate and phosphoenolpyruvate: step 4/7. In terms of biological role, involved in the biosynthesis of the chorismate, which leads to the biosynthesis of aromatic amino acids. Catalyzes the reversible NADPH linked reduction of 3-dehydroshikimate (DHSA) to yield shikimate (SA). In Shewanella baltica (strain OS223), this protein is Shikimate dehydrogenase (NADP(+)).